Here is a 394-residue protein sequence, read N- to C-terminus: Cobalt-precorrin-5B C(1)-methyltransferase (394 aa).

It belongs to the CbiD family.

The enzyme catalyses Co-precorrin-5B + S-adenosyl-L-methionine = Co-precorrin-6A + S-adenosyl-L-homocysteine. The protein operates within cofactor biosynthesis; adenosylcobalamin biosynthesis; cob(II)yrinate a,c-diamide from sirohydrochlorin (anaerobic route): step 6/10. Functionally, catalyzes the methylation of C-1 in cobalt-precorrin-5B to form cobalt-precorrin-6A. The chain is Cobalt-precorrin-5B C(1)-methyltransferase from Clostridium beijerinckii (strain ATCC 51743 / NCIMB 8052) (Clostridium acetobutylicum).